A 1299-amino-acid polypeptide reads, in one-letter code: Tenascin-N (1299 aa).

The signal sequence occupies residues 1-28 (MSLQEMFRFPMGLLLGSVLLVASAPATL). 3 consecutive EGF-like domains span residues 167-198 (ERLACPGACSGHGRCVDGRCLCHEPYVGADCG), 199-229 (YPACPENCSGHGECVRGVCQCHEDFMSEDCS), and 230-260 (EKRCPGDCSGHGFCDTGECYCEEGFTGLDCA). Disulfide bonds link C171-C181, C175-C186, C188-C197, C202-C212, C206-C217, C219-C228, C233-C243, C237-C248, and C250-C259. Fibronectin type-III domains lie at 264–352 (TPQG…TDLA), 353–444 (VLGT…TEID), 445–532 (SPTN…TEID), 533–623 (SPAN…IDSP), 624–709 (KNLV…TDID), 710–800 (SPQN…IDSP), 801–886 (QNLV…TEID), 887–976 (GPKN…LDPP), and 977–1063 (RNLR…VGAR). A disordered region spans residues 605-624 (GDRESKKADTNAPTDIDSPK). The span at 960–977 (QESKKADTKAQTELDPPR) shows a compositional bias: basic and acidic residues. The disordered stretch occupies residues 960–982 (QESKKADTKAQTELDPPRNLRPS). The 218-residue stretch at 1061 to 1278 (GARFPHPSDC…YVELKIRPHG (218 aa)) folds into the Fibrinogen C-terminal domain. An N-linked (GlcNAc...) asparagine glycan is attached at N1149.

Belongs to the tenascin family. Homohexamer. In terms of tissue distribution, not detected in normal adult mammary tissues or brain but expressed in most breast tumors and brain tumors, such as glioblastomas, astrocytomas and oligodendrogliomas, tested. In brain tumors, detected around the endothelial cell layer of the clood vessels.

Its subcellular location is the secreted. The protein resides in the extracellular space. The protein localises to the extracellular matrix. Its function is as follows. Extracellular matrix protein that seems to be a ligand for ITGA8:ITGB1, ITGAV:ITGB1 and ITGA4:ITGB1. Involved in neurite outgrowth and cell migration in hippocampal explants. During endochondral bone formation, inhibits proliferation and differentiation of proteoblasts mediated by canonical WNT signaling. In tumors, stimulates angiogenesis by elongation, migration and sprouting of endothelial cells. Expressed in most mammary tumors, may facilitate tumorigenesis by supporting the migratory behavior of breast cancer cells. This is Tenascin-N from Homo sapiens (Human).